We begin with the raw amino-acid sequence, 350 residues long: MSNSWWLKPAQAIDVPMREAALARQQQLTKPAGSLAQLERLAVQLAGLQGRERPAADKLWIAIFAGDHGVVAEGVSAYPQEVTGQMLHNFVNGGAAISVLARQLSAQLDVVDLGTVAPLDLPGVRHLRIGAGTANFAHGPAMSAEQGLAALQAGRDSVLRAKAVGTELFIGGEMGIGNTTAASAVACSVLECAAPLLVGPGTGLNAEGIEHKTRVIERALALHAEQAGDPLHSLFCLGGFEIAALTGAYLACAQEGIVALVDGFICSVAALVAVRLNPSCRNWLLFGHRGAEPGHRHLLETLQAEPLLDLGLRLGEGSGAALAVPLVRLACELHNGMATFAEAAVADRPA.

Glu316 (proton acceptor) is an active-site residue.

It belongs to the CobT family.

The catalysed reaction is 5,6-dimethylbenzimidazole + nicotinate beta-D-ribonucleotide = alpha-ribazole 5'-phosphate + nicotinate + H(+). Its pathway is nucleoside biosynthesis; alpha-ribazole biosynthesis; alpha-ribazole from 5,6-dimethylbenzimidazole: step 1/2. Catalyzes the synthesis of alpha-ribazole-5'-phosphate from nicotinate mononucleotide (NAMN) and 5,6-dimethylbenzimidazole (DMB). This chain is Nicotinate-nucleotide--dimethylbenzimidazole phosphoribosyltransferase, found in Pseudomonas savastanoi pv. phaseolicola (strain 1448A / Race 6) (Pseudomonas syringae pv. phaseolicola (strain 1448A / Race 6)).